Here is a 267-residue protein sequence, read N- to C-terminus: L-aspartate dehydrogenase (267 aa).

NAD(+)-binding residues include alanine 124 and asparagine 190. Histidine 218 is a catalytic residue.

The protein belongs to the L-aspartate dehydrogenase family.

It catalyses the reaction L-aspartate + NADP(+) + H2O = oxaloacetate + NH4(+) + NADPH + H(+). The enzyme catalyses L-aspartate + NAD(+) + H2O = oxaloacetate + NH4(+) + NADH + H(+). Its pathway is cofactor biosynthesis; NAD(+) biosynthesis; iminoaspartate from L-aspartate (dehydrogenase route): step 1/1. Functionally, specifically catalyzes the NAD or NADP-dependent dehydrogenation of L-aspartate to iminoaspartate. The protein is L-aspartate dehydrogenase of Methanococcus maripaludis (strain DSM 14266 / JCM 13030 / NBRC 101832 / S2 / LL).